A 425-amino-acid chain; its full sequence is Serine--tRNA ligase (425 aa).

An L-serine-binding site is contributed by 231-233 (TAE). Residues 262-264 (RTE) and Val278 contribute to the ATP site. Glu285 serves as a coordination point for L-serine. 349-352 (EVTS) contacts ATP. Thr384 provides a ligand contact to L-serine.

Belongs to the class-II aminoacyl-tRNA synthetase family. Type-1 seryl-tRNA synthetase subfamily. Homodimer. The tRNA molecule binds across the dimer.

It is found in the cytoplasm. It catalyses the reaction tRNA(Ser) + L-serine + ATP = L-seryl-tRNA(Ser) + AMP + diphosphate + H(+). The enzyme catalyses tRNA(Sec) + L-serine + ATP = L-seryl-tRNA(Sec) + AMP + diphosphate + H(+). It participates in aminoacyl-tRNA biosynthesis; selenocysteinyl-tRNA(Sec) biosynthesis; L-seryl-tRNA(Sec) from L-serine and tRNA(Sec): step 1/1. Its function is as follows. Catalyzes the attachment of serine to tRNA(Ser). Is also able to aminoacylate tRNA(Sec) with serine, to form the misacylated tRNA L-seryl-tRNA(Sec), which will be further converted into selenocysteinyl-tRNA(Sec). The protein is Serine--tRNA ligase of Dictyoglomus turgidum (strain DSM 6724 / Z-1310).